A 140-amino-acid chain; its full sequence is Ribosome-binding factor A (140 aa).

Positions 1–13 (MQKKSSSKSHRAT) are enriched in basic residues. Residues 1–22 (MQKKSSSKSHRATRGPSQRQLR) form a disordered region.

This sequence belongs to the RbfA family. Monomer. Binds 30S ribosomal subunits, but not 50S ribosomal subunits or 70S ribosomes.

The protein localises to the cytoplasm. Its function is as follows. One of several proteins that assist in the late maturation steps of the functional core of the 30S ribosomal subunit. Associates with free 30S ribosomal subunits (but not with 30S subunits that are part of 70S ribosomes or polysomes). Required for efficient processing of 16S rRNA. May interact with the 5'-terminal helix region of 16S rRNA. The sequence is that of Ribosome-binding factor A from Parvibaculum lavamentivorans (strain DS-1 / DSM 13023 / NCIMB 13966).